Reading from the N-terminus, the 355-residue chain is Peptide chain release factor 1 (355 aa).

Gln232 carries the N5-methylglutamine modification. Positions 282-309 are disordered; that stretch reads EQNASISAERKSQVGSGDRSERIRTYNY. The span at 289–305 shows a compositional bias: basic and acidic residues; that stretch reads AERKSQVGSGDRSERIR.

The protein belongs to the prokaryotic/mitochondrial release factor family. In terms of processing, methylated by PrmC. Methylation increases the termination efficiency of RF1.

Its subcellular location is the cytoplasm. Functionally, peptide chain release factor 1 directs the termination of translation in response to the peptide chain termination codons UAG and UAA. This chain is Peptide chain release factor 1, found in Desulfatibacillum aliphaticivorans.